We begin with the raw amino-acid sequence, 136 residues long: ATP synthase epsilon chain (136 aa).

The interval Gln-100–Asn-120 is disordered. Positions Glu-105–Asn-114 are enriched in basic and acidic residues.

This sequence belongs to the ATPase epsilon chain family. As to quaternary structure, F-type ATPases have 2 components, CF(1) - the catalytic core - and CF(0) - the membrane proton channel. CF(1) has five subunits: alpha(3), beta(3), gamma(1), delta(1), epsilon(1). CF(0) has three main subunits: a, b and c.

The protein localises to the cellular thylakoid membrane. In terms of biological role, produces ATP from ADP in the presence of a proton gradient across the membrane. In Synechocystis sp. (strain ATCC 27184 / PCC 6803 / Kazusa), this protein is ATP synthase epsilon chain (atpC).